Here is a 379-residue protein sequence, read N- to C-terminus: uncharacterized protein (379 aa).

Residues 7 to 27 traverse the membrane as a helical segment; sequence VYIFAGIFLFIALIILIKIFF.

The protein localises to the membrane. This is an uncharacterized protein from Caenorhabditis elegans.